A 484-amino-acid polypeptide reads, in one-letter code: ATP-dependent RNA helicase DDX25 (484 aa).

Phosphothreonine is present on T49. The Nuclear export signal signature appears at 62–75 (LAANSLLNKLIRQS). Positions 98–126 (KTFEELRLKEELLKGIYAMGFNRPSKIQE) match the Q motif motif. The short motif at 101–115 (EELRLKEELLKGIYA) is the Nuclear localization signal element. One can recognise a Helicase ATP-binding domain in the interval 131 to 301 (MMLAHPPQNL…ERIIPDPNVI (171 aa)). 144-151 (SQSGTGKT) provides a ligand contact to ATP. The DEAD box motif lies at 248-251 (DEAD). The Helicase C-terminal domain maps to 312–479 (NIRQYYVLCE…QLDPEDMDEI (168 aa)).

Belongs to the DEAD box helicase family. In terms of processing, phosphorylated on threonine residues. The phosphorylated form is found in the cytoplasm but not in the nucleus. As to expression, isoform 1 is expressed in germ cells. Isoform 2 is expressed in Leydig cells and in round spermatids of adult testis upon gonadotropin stimulation.

It is found in the cytoplasm. The protein localises to the nucleus. The enzyme catalyses ATP + H2O = ADP + phosphate + H(+). In terms of biological role, ATP-dependent RNA helicase. Required for mRNA export and translation regulation during spermatid development. The protein is ATP-dependent RNA helicase DDX25 (Ddx25) of Mus musculus (Mouse).